The following is a 151-amino-acid chain: Arginine repressor (151 aa).

It belongs to the ArgR family.

The protein resides in the cytoplasm. It functions in the pathway amino-acid biosynthesis; L-arginine biosynthesis [regulation]. In terms of biological role, regulates arginine biosynthesis genes. This chain is Arginine repressor, found in Heliobacterium modesticaldum (strain ATCC 51547 / Ice1).